We begin with the raw amino-acid sequence, 90 residues long: Cell division topological specificity factor (90 aa).

Belongs to the MinE family.

Its function is as follows. Prevents the cell division inhibition by proteins MinC and MinD at internal division sites while permitting inhibition at polar sites. This ensures cell division at the proper site by restricting the formation of a division septum at the midpoint of the long axis of the cell. The sequence is that of Cell division topological specificity factor from Pelotomaculum thermopropionicum (strain DSM 13744 / JCM 10971 / SI).